A 203-amino-acid chain; its full sequence is E3 ubiquitin-protein ligase RNF152 (203 aa).

The RING-type zinc-finger motif lies at 12–55 (CQICFNYYSPRRRPKLLDCKHTCCSVCLQQMRTSQKDLRCPWCR). Residues 167–187 (SGVCTVILVACVLVFLLGIVL) form a helical membrane-spanning segment.

Belongs to the RNF152 family.

It is found in the lysosome membrane. The enzyme catalyses S-ubiquitinyl-[E2 ubiquitin-conjugating enzyme]-L-cysteine + [acceptor protein]-L-lysine = [E2 ubiquitin-conjugating enzyme]-L-cysteine + N(6)-ubiquitinyl-[acceptor protein]-L-lysine.. Its pathway is protein modification; protein ubiquitination. In terms of biological role, E3 ubiquitin-protein ligase that acts as a negative regulator of mTORC1 signaling by mediating ubiquitination of RagA/RRAGA and RHEB. Catalyzes 'Lys-63'-linked polyubiquitination of RagA/RRAGA in response to amino acid starvation, thereby regulating mTORC1 signaling. Also mediates monoubiquitination of RHEB, promoting its association with the TSC-TBC complex and subsequent inhibition. Also mediates 'Lys-48'-linked polyubiquitination of target proteins and their subsequent targeting to the proteasome for degradation. In Gallus gallus (Chicken), this protein is E3 ubiquitin-protein ligase RNF152.